A 465-amino-acid chain; its full sequence is tRNA (guanine(37)-N(1))-methyltransferase (465 aa).

Residues His-189, 227–228 (DL), and 255–256 (DA) contribute to the S-adenosyl-L-methionine site. The interval 283 to 362 (YPKEGVPANE…GPGPPPSKPW (80 aa)) is disordered. Over residues 291-320 (NENSSSNGNHNDVREGSQNGANESSVASTT) the composition is skewed to polar residues. A compositionally biased stretch (basic residues) spans 343 to 352 (TKRRNNKRVR). Asn-371 serves as a coordination point for S-adenosyl-L-methionine.

This sequence belongs to the class I-like SAM-binding methyltransferase superfamily. TRM5/TYW2 family. Monomer.

Its subcellular location is the mitochondrion matrix. It localises to the nucleus. It is found in the cytoplasm. The catalysed reaction is guanosine(37) in tRNA + S-adenosyl-L-methionine = N(1)-methylguanosine(37) in tRNA + S-adenosyl-L-homocysteine + H(+). Specifically methylates the N1 position of guanosine-37 in various cytoplasmic and mitochondrial tRNAs. Methylation is not dependent on the nature of the nucleoside 5' of the target nucleoside. This is the first step in the biosynthesis of wybutosine (yW), a modified base adjacent to the anticodon of tRNAs and required for accurate decoding. This Sorghum bicolor (Sorghum) protein is tRNA (guanine(37)-N(1))-methyltransferase.